Consider the following 761-residue polypeptide: NADP-dependent malic enzyme (761 aa).

A malic enzyme region spans residues 1–437; that stretch reads MPGIDKTDRA…QLSARRDPIA (437 aa). Tyrosine 49 functions as the Proton donor in the catalytic mechanism. Lysine 104 serves as the catalytic Proton acceptor. A divalent metal cation contacts are provided by glutamate 146, aspartate 147, and aspartate 172. Residues 205–208, asparagine 297, and asparagine 329 contribute to the NADP(+) site; that span reads AGAA. The segment at 438–761 is phosphate acetyltransferase; the sequence is STLQRIVERV…AAIAAYNAGT (324 aa).

This sequence in the N-terminal section; belongs to the malic enzymes family. The protein in the C-terminal section; belongs to the phosphate acetyltransferase and butyryltransferase family. In terms of assembly, homooctamer. Mg(2+) serves as cofactor. Requires Mn(2+) as cofactor.

It carries out the reaction (S)-malate + NADP(+) = pyruvate + CO2 + NADPH. The enzyme catalyses oxaloacetate + H(+) = pyruvate + CO2. The sequence is that of NADP-dependent malic enzyme (tme) from Rhizobium meliloti (strain 1021) (Ensifer meliloti).